The following is a 275-amino-acid chain: MAIVKVKPTSPGRRAMVKVVNKDLHKGKPHAALLDTQSSKAGRNNNGCITTRHQGGGHKQHYRVIDFRRTKDGIPAKVERLEYDPNRSANIALVLYADGERRYIIAPKGVTVGQQLMSGSEAPIRAGNTLPIRNIPVGTTIHCIEMLPGKGAQMARSAGTSAMLLAREGLYAQVRLRSGEIRRVHIECRATIGEVGNEEHSLRQIGKAGANRWRGIRPTVRGVAMNPIDHPHGGGEGRTAAGRDPVSPWGTPTKGFRTRRNKRTTTMIVQRRHKR.

A disordered region spans residues 224-257 (AMNPIDHPHGGGEGRTAAGRDPVSPWGTPTKGFR).

Belongs to the universal ribosomal protein uL2 family. Part of the 50S ribosomal subunit. Forms a bridge to the 30S subunit in the 70S ribosome.

One of the primary rRNA binding proteins. Required for association of the 30S and 50S subunits to form the 70S ribosome, for tRNA binding and peptide bond formation. It has been suggested to have peptidyltransferase activity; this is somewhat controversial. Makes several contacts with the 16S rRNA in the 70S ribosome. The chain is Large ribosomal subunit protein uL2 from Burkholderia mallei (strain NCTC 10247).